Consider the following 1426-residue polypeptide: Ferlin 2 (1426 aa).

C2 domains follow at residues M1–K111, R161–F279, E512–T638, S1031–M1154, and K1189–S1318. A disordered region spans residues S1357 to Q1377. The segment covering P1366–Q1377 has biased composition (basic and acidic residues). The helical transmembrane segment at V1404–L1424 threads the bilayer.

This sequence belongs to the ferlin family.

The protein resides in the membrane. Its subcellular location is the inner membrane complex. It is found in the cytoplasmic vesicle. It localises to the secretory vesicle. The protein localises to the rhoptry. Functionally, regulates rhoptry secretion. Required for completing the lytic cycle. Required for host cell invasion. Not required for microneme secretion and conoid extrusion. The chain is Ferlin 2 from Toxoplasma gondii.